The sequence spans 101 residues: Large ribosomal subunit protein uL23 (101 aa).

It belongs to the universal ribosomal protein uL23 family. In terms of assembly, part of the 50S ribosomal subunit. Contacts protein L29, and trigger factor when it is bound to the ribosome.

Its function is as follows. One of the early assembly proteins it binds 23S rRNA. One of the proteins that surrounds the polypeptide exit tunnel on the outside of the ribosome. Forms the main docking site for trigger factor binding to the ribosome. The polypeptide is Large ribosomal subunit protein uL23 (Rhodococcus erythropolis (strain PR4 / NBRC 100887)).